Consider the following 1139-residue polypeptide: MNSIKIDSSTKIVIEYIDKLRNCSNEKRQKVSSVIRPVDFPGISTQQLCDILIRFAYNGTYIDDVFRDHLLKLVVDKSITWNQVIHSVINTKTDRIYSKCLQCELIREMVNYVQIKSFSDKLHADELISIMKPTVFFLAQLIQDVLSDEDELEMIQIEYGDVRKAYYKPLEALSAFIHDDLCSSLLAFSEASEITHQLELCRDSFSKLRSPDKSATTLVEMLIERHIEKCKPVKFQYIPEGIALFDLKNPSIRILIPIFACFKNHESSKLMAETIQTFAEIMRFYGPDVIFDILHGAILLKCEESMDLLHFPKQHRADFRWQSTTFFYKKLPQIIEYLIRSEKLTVAEVQFGLEKALTDLSMMFDAADVAWQNASFLTLLNELEPVLGKTITDPLRLRRREHMKTNDQLLPFADTDNQLIENTDIDKLLNAVKEVMNLQFGQTEEFSKLFVDKVKTGQTDNFDAITSILITEGRLMEVGKAFVLKNVEAQRSSAVGVNERIQIFDDTFILLSRILIKNPSVSINMFVNGGPGKSDAEQTMFYKWSMRYVKRVAKHRDPEPKDETEYIALRKEVEMLMRLANAEVGIEDDLENDVEEEMPEVQEPNIETQNVDEISIPDPLHLLIENDPTVTAESKETEEVKFNPEGVEQMDTNEKPAEISDSLIEPTLLEEPKDILENIIVPIIKVEAPKPDSPIKKKKDPDVTWHEVHCPLPRISRRTARAYLAQMKEGIPFWKTDDPNLNIGSILAAIPRLGQLLVDEHEEKRNRIDRKSAEENMTNILHAIESMPSLFLCLLEWLDCEPESGARTSLAFTINLSLERYLAVSTHGINYMKWIFIKSTVQQMIDELVDKSPAFPEVTCTAFSTARRFCPFVGRNENPDQLKLKHAWYYMRQQAWASPHALRLLEHANTAREYDVWSHIYISKTIKSGCGDIMTSSVDMIFSFLMLDDLNSIIRIHESLMAFWLSEDAGQCQADGRFDPLSIRVVIRLMTQVLLIAEWTLDRLLNEDPAFVERLNLKEVKAPEPEDPDKREKWIFLLRSMLERTINRFFKIVRKGLLSNVVNTIIQLLKSIAGSADCKAKRLLVKRIPPDLIFQLAYIEPSSVDYSLMNIYCDPDNKEHTQTKIMFLCALRRSQSFSF.

The short motif at 695-701 (IKKKKDP) is the Nuclear localization signal element.

As to expression, expressed in seam cells and all six vulva precursor cells (VPC). After VPC division, expression is restricted to descendants of the VPC cell lineages P5.p, P6.p and P7.p (at protein level).

It localises to the nucleus. The protein resides in the cytoplasm. In terms of biological role, participates in the inductive signaling pathway downstream of let-60 Ras and the RAF/MAP kinase cascade to regulate specification and differentiation of many cell types. Positively regulates the fate of vulval precursor cells. Required for induction of the P12 and excretory duct cell fates. In males, it is also required for proper formation of spicules. Does not function in the signaling pathway that promotes exit from pachytene. Plays a role in responses to M.nematophilum-mediated bacterial infection by promoting tail swelling and preventing constipation. The chain is Protein lin-25 (lin-25) from Caenorhabditis elegans.